The following is a 477-amino-acid chain: Long-chain acyl-protein thioester reductase (477 aa).

It belongs to the LuxC family.

The catalysed reaction is a long-chain fatty aldehyde + NADP(+) + CoA = a long-chain fatty acyl-CoA + NADPH + H(+). It participates in lipid metabolism; fatty acid reduction for biolumincescence. LuxC is the fatty acid reductase enzyme responsible for synthesis of the aldehyde substrate for the luminescent reaction catalyzed by luciferase. This is Long-chain acyl-protein thioester reductase (luxC) from Vibrio harveyi (Beneckea harveyi).